A 332-amino-acid polypeptide reads, in one-letter code: Torsin-1A (332 aa).

Residues 1–20 (MKLGRAVLGLLLLAPSVVQA) form the signal peptide. The segment at 91-251 (KPKKPLTLSL…VSVFNNKNSG (161 aa)) is interaction with SNAPIN. Residue 102 to 109 (GWTGTGKN) participates in ATP binding. 2 N-linked (GlcNAc...) (high mannose) asparagine glycosylation sites follow: Asn-143 and Asn-158. An interaction with KLC1 region spans residues 251–332 (GFWHSSLIDR…FTKLDYYYDD (82 aa)). Residues 312 to 332 (RVFSDKGCKTVFTKLDYYYDD) are interaction with SYNE3.

The protein belongs to the ClpA/ClpB family. Torsin subfamily. Homohexamer. Interacts with TOR1B; the interaction may be specific of neural tissues. Interacts (ATP-bound) with TOR1AIP1 and TOR1AIP2; the interactions induce ATPase activity. Interacts with KLHL14; preferentially when ATP-free. Interacts with KLC1 (via TPR repeats); the interaction associates TOR1A with the kinesin oligomeric complex. Interacts with COPS4; the interaction associates TOR1A with the CSN complex. Interacts with SNAPIN; the interaction is direct and associates SNAPIN with the CSN complex. Interacts with STON2. Interacts (ATP-bound) with SYNE3 (via KASH domain); the interaction is required for SYNE3 nuclear envelope localization. Interacts with VIM; the interaction associates TOR1A with the cytoskeleton. Interacts with PLEC. Interacts (ATP-bound) with SLC6A3; regulates SLC6A3 transport to the plasma membrane. In terms of processing, N-glycosylated. As to expression, widely expressed. Highest levels in kidney and liver. In the brain, high levels found in the dopaminergic neurons of the substantia nigra pars compacta, as well as in the neocortex, hippocampus and cerebellum. Also highly expressed in the spinal cord.

It localises to the endoplasmic reticulum lumen. The protein resides in the nucleus membrane. It is found in the cell projection. The protein localises to the growth cone. Its subcellular location is the cytoplasmic vesicle membrane. It localises to the cytoplasmic vesicle. The protein resides in the secretory vesicle. It is found in the synaptic vesicle. The protein localises to the cytoplasm. Its subcellular location is the cytoskeleton. It carries out the reaction ATP + H2O = ADP + phosphate + H(+). Protein with chaperone functions important for the control of protein folding, processing, stability and localization as well as for the reduction of misfolded protein aggregates. Involved in the regulation of synaptic vesicle recycling, controls STON2 protein stability in collaboration with the COP9 signalosome complex (CSN). In the nucleus, may link the cytoskeleton with the nuclear envelope, this mechanism seems to be crucial for the control of nuclear polarity, cell movement and, specifically in neurons, nuclear envelope integrity. Participates in the cellular trafficking and may regulate the subcellular location of multipass membrane proteins such as the dopamine transporter SLC6A3, leading to the modulation of dopamine neurotransmission. In the endoplasmic reticulum, plays a role in the quality control of protein folding by increasing clearance of misfolded proteins such as SGCE variants or holding them in an intermediate state for proper refolding. May have a redundant function with TOR1B in non-neural tissues. The polypeptide is Torsin-1A (TOR1A) (Homo sapiens (Human)).